We begin with the raw amino-acid sequence, 639 residues long: Phosphatidylinositol 3,4,5-trisphosphate 3-phosphatase cnrN (639 aa).

A Phosphatase tensin-type domain is found at 20–190; that stretch reads FKSKEMDLDL…NYFKEIVSGS (171 aa). Cys-129 acts as the Phosphocysteine intermediate in catalysis. Positions 195 to 350 constitute a C2 tensin-type domain; that stretch reads EFVLTFRSIE…LQMECRFQNN (156 aa). Disordered regions lie at residues 243 to 265, 395 to 429, 451 to 498, 519 to 567, and 598 to 628; these read INND…NNNN, NNIL…HSTP, SSSG…SCSS, NNNN…RKRK, and FTKK…DPSE. 4 stretches are compositionally biased toward low complexity: residues 244–265, 395–424, 458–486, and 519–554; these read NNDN…NNNN, NNIL…LPSS, NSSR…SRSS, and NNNN…SNSN. A compositionally biased stretch (polar residues) spans 598–608; sequence FTKKINPNNNE. Over residues 619–628 the composition is skewed to basic and acidic residues; the sequence is LKKETNDPSE.

Mg(2+) serves as cofactor.

It carries out the reaction a 1,2-diacyl-sn-glycero-3-phospho-(1D-myo-inositol-3,4,5-trisphosphate) + H2O = a 1,2-diacyl-sn-glycero-3-phospho-(1D-myo-inositol-4,5-bisphosphate) + phosphate. Its function is as follows. Protein phosphatase that negatively regulates PI3K-dependent pathways. Regulates cAMP signal transduction to control territory size. During development, a lawn of Dictyostelium cells breaks up into territories where cells aggregate in dendritic streams to form groups of 20'000 cells. In Dictyostelium discoideum (Social amoeba), this protein is Phosphatidylinositol 3,4,5-trisphosphate 3-phosphatase cnrN (cnrN).